The following is a 686-amino-acid chain: Soluble guanylate cyclase gcy-34 (686 aa).

Heme is bound at residue histidine 105. Coiled-coil stretches lie at residues 306–335 (KKHM…ELTQ) and 398–432 (VEVN…LKDM). The region spanning 455 to 583 (TVMFCDLPAF…ETVTLASQME (129 aa)) is the Guanylate cyclase domain. Positions 460 and 504 each coordinate Mg(2+).

It belongs to the adenylyl cyclase class-4/guanylyl cyclase family. As to quaternary structure, heterodimer; with other soluble guanylate cyclases. The cofactor is heme. As to expression, expressed in a small number of neurons, corresponding to URX, AQR and PQR neurons.

It localises to the cytoplasm. The enzyme catalyses GTP = 3',5'-cyclic GMP + diphosphate. Its activity is regulated as follows. May be regulated by molecular oxygen. Probably not activated by nitric oxide (NO). Synthesizes cyclic GMP (cGMP) from GTP. May be involved in sensitivity to quinine by regulating egl-4 activity through the production of cGMP. The protein is Soluble guanylate cyclase gcy-34 (gcy-34) of Caenorhabditis elegans.